We begin with the raw amino-acid sequence, 321 residues long: MLNKLIERENLSFKESYELFNMLLNESEMRIAAYLVALQTKGVTADEIAGFAKAMRDNAVKIDLGEVTDTCGTGGDGSKTINVSTAVSIILACFTKVAKHGNVSITSNSGSANVYEALGCKIPETPEDAKKSMDKTNFVFLFAQKYHPALKKIMPVRNELKVKTIFNILGPLANPANPKYQILGVNSAELCENVAFALSKVGGIKKALLVYGNGLDELTPNGTSKITEYDGKFDTYEVTPKDFGLDYSKIIPCESPDESAKRLIDVFSGKINEDRNFILMNAAAALYTSEIASDFLDGVEIAKEAIESGKVLKKLEEIRNV.

5-phospho-alpha-D-ribose 1-diphosphate contacts are provided by residues glycine 72, 75 to 76 (GD), threonine 80, 82 to 85 (NVST), 99 to 107 (KHGNVSITS), and serine 111. Glycine 72 is a binding site for anthranilate. Serine 84 contacts Mg(2+). Residue asparagine 102 participates in anthranilate binding. Residue arginine 157 coordinates anthranilate. The Mg(2+) site is built by aspartate 216 and glutamate 217.

This sequence belongs to the anthranilate phosphoribosyltransferase family. Homodimer. Mg(2+) is required as a cofactor.

It carries out the reaction N-(5-phospho-beta-D-ribosyl)anthranilate + diphosphate = 5-phospho-alpha-D-ribose 1-diphosphate + anthranilate. It functions in the pathway amino-acid biosynthesis; L-tryptophan biosynthesis; L-tryptophan from chorismate: step 2/5. In terms of biological role, catalyzes the transfer of the phosphoribosyl group of 5-phosphorylribose-1-pyrophosphate (PRPP) to anthranilate to yield N-(5'-phosphoribosyl)-anthranilate (PRA). The protein is Anthranilate phosphoribosyltransferase of Methanococcus maripaludis (strain C5 / ATCC BAA-1333).